We begin with the raw amino-acid sequence, 732 residues long: uncharacterized protein (732 aa).

A run of 2 helical transmembrane segments spans residues 687–707 (YLFP…GSDL) and 712–732 (GVKV…YYTS).

Belongs to the FadG family.

Its subcellular location is the cell membrane. This is an uncharacterized protein from Bacillus subtilis (strain 168).